A 493-amino-acid chain; its full sequence is Glycerol kinase (493 aa).

T11 is a binding site for ADP. The ATP site is built by T11, T12, and S13. T11 contributes to the sn-glycerol 3-phosphate binding site. ADP is bound at residue R15. Sn-glycerol 3-phosphate-binding residues include R80, E81, Y132, and D241. Glycerol contacts are provided by R80, E81, Y132, D241, and Q242. T263 and G306 together coordinate ADP. ATP contacts are provided by T263, G306, Q310, and G408. G408 is a binding site for ADP.

The protein belongs to the FGGY kinase family.

It carries out the reaction glycerol + ATP = sn-glycerol 3-phosphate + ADP + H(+). The protein operates within polyol metabolism; glycerol degradation via glycerol kinase pathway; sn-glycerol 3-phosphate from glycerol: step 1/1. Its activity is regulated as follows. Inhibited by fructose 1,6-bisphosphate (FBP). Its function is as follows. Key enzyme in the regulation of glycerol uptake and metabolism. Catalyzes the phosphorylation of glycerol to yield sn-glycerol 3-phosphate. The chain is Glycerol kinase from Cereibacter sphaeroides (strain ATCC 17029 / ATH 2.4.9) (Rhodobacter sphaeroides).